The primary structure comprises 274 residues: MKKLLAGFLTLSLALAACSNGSDDDSSKKDDSSKDNQSSDDKSKDSKNDDKKNNDSDKDKDNNSDSDKNSDSKSDDSSSSDRNNGDDENSSDNASGSDSSSSNNDSNANSDGSSSNADGDNASGNNDNANNATSSESNGNENGAMNDANGSNSNDNASADANNGASSANTSQYVAPYQGQNAVPVAQNITSGTPDSQAALQNLPNFQNALDNATTEVNGLNGQSNPYNDYAIEGSEGNYSYIFSFQNQAQPGTYTIATVDQQGTVRVVDPAYQQ.

The first 17 residues, 1 to 17, serve as a signal peptide directing secretion; it reads MKKLLAGFLTLSLALAA. Cysteine 18 is lipidated: N-palmitoyl cysteine. Residue cysteine 18 is the site of S-diacylglycerol cysteine attachment. The segment at 18-169 is disordered; sequence CSNGSDDDSS…DANNGASSAN (152 aa). Basic and acidic residues predominate over residues 25–76; the sequence is DSSKKDDSSKDNQSSDDKSKDSKNDDKKNNDSDKDKDNNSDSDKNSDSKSDD. Residues 91 to 169 show a composition bias toward low complexity; sequence SDNASGSDSS…DANNGASSAN (79 aa).

The protein resides in the cell membrane. This is an uncharacterized protein from Staphylococcus saprophyticus subsp. saprophyticus (strain ATCC 15305 / DSM 20229 / NCIMB 8711 / NCTC 7292 / S-41).